A 121-amino-acid chain; its full sequence is Large ribosomal subunit protein bL12 (121 aa).

This sequence belongs to the bacterial ribosomal protein bL12 family. Homodimer. Part of the ribosomal stalk of the 50S ribosomal subunit. Forms a multimeric L10(L12)X complex, where L10 forms an elongated spine to which 2 to 4 L12 dimers bind in a sequential fashion. Binds GTP-bound translation factors.

In terms of biological role, forms part of the ribosomal stalk which helps the ribosome interact with GTP-bound translation factors. Is thus essential for accurate translation. In Erwinia tasmaniensis (strain DSM 17950 / CFBP 7177 / CIP 109463 / NCPPB 4357 / Et1/99), this protein is Large ribosomal subunit protein bL12.